The sequence spans 122 residues: Large ribosomal subunit protein uL14 (122 aa).

This sequence belongs to the universal ribosomal protein uL14 family. Part of the 50S ribosomal subunit. Forms a cluster with proteins L3 and L19. In the 70S ribosome, L14 and L19 interact and together make contacts with the 16S rRNA in bridges B5 and B8.

Its function is as follows. Binds to 23S rRNA. Forms part of two intersubunit bridges in the 70S ribosome. The sequence is that of Large ribosomal subunit protein uL14 from Paracoccus denitrificans (strain Pd 1222).